The following is a 241-amino-acid chain: SURF1-like protein (241 aa).

2 helical membrane-spanning segments follow: residues 5–25 and 199–219; these read LTVL…LNRL and LEYA…YRIY.

This sequence belongs to the SURF1 family.

Its subcellular location is the cell membrane. The polypeptide is SURF1-like protein (Rickettsia bellii (strain RML369-C)).